Here is a 255-residue protein sequence, read N- to C-terminus: H-2 class II histocompatibility antigen, E-K alpha chain (255 aa).

A signal peptide spans 1–25 (MATIGALVLRFFFIAVLMSSQKSWA). Residues 26 to 109 (IKEEHTIIQA…ERSNNTPDAN (84 aa)) form an alpha-1 region. Residues 26–216 (IKEEHTIIQA…EKTLLPETKE (191 aa)) lie on the Extracellular side of the membrane. The interval 110 to 203 (VAPEVTVLSR…GLEEPLRKHW (94 aa)) is alpha-2. The region spanning 112-204 (PEVTVLSRSP…LEEPLRKHWE (93 aa)) is the Ig-like C1-type domain. Cysteines 132 and 188 form a disulfide. Asparagine 143 carries N-linked (GlcNAc...) asparagine glycosylation. The interval 204–216 (EFEEKTLLPETKE) is connecting peptide. A helical membrane pass occupies residues 217–242 (NVVCALGLFVGLVGIVVGIILIMKGI). The Cytoplasmic segment spans residues 243-255 (KKRNVVERRQGAL).

This sequence belongs to the MHC class II family.

The protein localises to the membrane. The chain is H-2 class II histocompatibility antigen, E-K alpha chain from Mus musculus (Mouse).